We begin with the raw amino-acid sequence, 219 residues long: Charged multivesicular body protein 5 (219 aa).

Residues 1-10 (MNRLFGKAKP) show a composition bias toward basic residues. Residues 1 to 21 (MNRLFGKAKPKAPPPSLTDCI) are disordered. A lipid anchor ((Microbial infection) N6-stearoyl lysine) is attached at K7. Positions 26 to 179 (SRAESIDKKI…LGDELLADED (154 aa)) form a coiled coil. Position 86 is a phosphoserine (S86). Residues 121–158 (KQVKIDQIEDLQDQLEDMMEDANEIQEALSRSYGTPEL) are interaction with VTA1. The interval 188–219 (SAPAIPEGVPTDTKNKDGVLVDEFGLPQIPAS) is disordered.

It belongs to the SNF7 family. As to quaternary structure, probable peripherally associated component of the endosomal sorting required for transport complex III (ESCRT-III). ESCRT-III components are thought to multimerize to form a flat lattice on the perimeter membrane of the endosome. Several assembly forms of ESCRT-III may exist that interact and act sequentially. Interacts with VTA1; the interaction involves soluble CHMP5. Interacts with CHMP2A. Interacts with NOD2. Interacts with BROX. In terms of processing, (Microbial infection) Stearoylated By S.flexneri N-epsilon-fatty acyltransferase IcsB, promoting S.flexneri evasion of autophagy. Post-translationally, ISGylated. Isgylation inhibits its interaction with VTA1.

It localises to the cytoplasm. It is found in the cytosol. Its subcellular location is the endosome membrane. The protein resides in the midbody. In terms of biological role, probable peripherally associated component of the endosomal sorting required for transport complex III (ESCRT-III) which is involved in multivesicular bodies (MVBs) formation and sorting of endosomal cargo proteins into MVBs. MVBs contain intraluminal vesicles (ILVs) that are generated by invagination and scission from the limiting membrane of the endosome and mostly are delivered to lysosomes enabling degradation of membrane proteins, such as stimulated growth factor receptors, lysosomal enzymes and lipids. The MVB pathway appears to require the sequential function of ESCRT-O, -I,-II and -III complexes. ESCRT-III proteins mostly dissociate from the invaginating membrane before the ILV is released. The ESCRT machinery also functions in topologically equivalent membrane fission events, such as the terminal stages of cytokinesis and the budding of enveloped viruses (HIV-1 and other lentiviruses). ESCRT-III proteins are believed to mediate the necessary vesicle extrusion and/or membrane fission activities, possibly in conjunction with the AAA ATPase VPS4. Involved in HIV-1 p6- and p9-dependent virus release. This is Charged multivesicular body protein 5 (CHMP5) from Homo sapiens (Human).